A 423-amino-acid polypeptide reads, in one-letter code: UPF0229 protein Pmen_4018 (423 aa).

The disordered stretch occupies residues 65–108 (HHGRGGKQTIVHPGNKEFTAGERIPRPQGGGGGRGSGKASNSGE).

It belongs to the UPF0229 family.

The chain is UPF0229 protein Pmen_4018 from Ectopseudomonas mendocina (strain ymp) (Pseudomonas mendocina).